Here is a 167-residue protein sequence, read N- to C-terminus: Lipoprotein signal peptidase (167 aa).

4 helical membrane passes run 8–28 (TFLT…VVLL), 46–66 (WGHF…FGLF), 68–88 (QYKI…ALFL), and 101–121 (VALT…LLYG). Active-site residues include Asp-125 and Asp-143. A helical membrane pass occupies residues 139-159 (FNLADAFISIGTLLLIGHLYF).

This sequence belongs to the peptidase A8 family.

It is found in the cell inner membrane. The catalysed reaction is Release of signal peptides from bacterial membrane prolipoproteins. Hydrolyzes -Xaa-Yaa-Zaa-|-(S,diacylglyceryl)Cys-, in which Xaa is hydrophobic (preferably Leu), and Yaa (Ala or Ser) and Zaa (Gly or Ala) have small, neutral side chains.. The protein operates within protein modification; lipoprotein biosynthesis (signal peptide cleavage). Its function is as follows. This protein specifically catalyzes the removal of signal peptides from prolipoproteins. This Chlamydia trachomatis serovar A (strain ATCC VR-571B / DSM 19440 / HAR-13) protein is Lipoprotein signal peptidase.